The following is a 543-amino-acid chain: uncharacterized protein (543 aa).

Residues 1–59 (MLKKNDIVEVEIVDLTHEGAGVAKVDGLVFFVENALPSEKILMRVLKVNKKIGFGKVEK) form the TRAM domain. 4 residues coordinate S-adenosyl-L-methionine: Gln-283, Tyr-312, Glu-333, and Asp-381. Catalysis depends on Cys-408, which acts as the Nucleophile.

Belongs to the class I-like SAM-binding methyltransferase superfamily. RNA M5U methyltransferase family.

This is an uncharacterized protein from Streptococcus pneumoniae serotype 4 (strain ATCC BAA-334 / TIGR4).